The chain runs to 88 residues: YcgL domain-containing protein CGSHiGG_01115 (88 aa).

The region spanning 1-85 is the YcgL domain; it reads MLCAIYKSKK…QDDGLFNSLS (85 aa).

The sequence is that of YcgL domain-containing protein CGSHiGG_01115 from Haemophilus influenzae (strain PittGG).